Consider the following 284-residue polypeptide: Nitrogenase iron protein 1 (284 aa).

17–24 (GKGGIGKS) serves as a coordination point for ATP. Cysteine 105 contributes to the [4Fe-4S] cluster binding site. Arginine 108 is subject to ADP-ribosylarginine; by dinitrogenase reductase ADP-ribosyltransferase. Position 140 (cysteine 140) interacts with [4Fe-4S] cluster.

Belongs to the NifH/BchL/ChlL family. In terms of assembly, homodimer. [4Fe-4S] cluster serves as cofactor. Post-translationally, the reversible ADP-ribosylation of Arg-108 inactivates the nitrogenase reductase and regulates nitrogenase activity.

The enzyme catalyses N2 + 8 reduced [2Fe-2S]-[ferredoxin] + 16 ATP + 16 H2O = H2 + 8 oxidized [2Fe-2S]-[ferredoxin] + 2 NH4(+) + 16 ADP + 16 phosphate + 6 H(+). The key enzymatic reactions in nitrogen fixation are catalyzed by the nitrogenase complex, which has 2 components: the iron protein and the molybdenum-iron protein. In Methanothermococcus thermolithotrophicus (Methanococcus thermolithotrophicus), this protein is Nitrogenase iron protein 1 (nifH1).